The sequence spans 219 residues: Glutathione S-transferase U19 (219 aa).

The GST N-terminal domain maps to 3–82 (NEVILLDFWP…YIDEVWSHKN (80 aa)). Glutathione is bound by residues 13-14 (SM), 39-40 (NK), 53-54 (KI), and 66-67 (ES). A GST C-terminal domain is found at 88 to 208 (DPYLRAQARF…LPDPEKVTEF (121 aa)). S198 carries the phosphoserine modification.

The protein belongs to the GST superfamily. Tau family.

Its subcellular location is the cytoplasm. It localises to the cytosol. The enzyme catalyses RX + glutathione = an S-substituted glutathione + a halide anion + H(+). Catalyzes the glutathionylation of 12-oxophytodienoate (OPDA). In vitro, possesses glutathione S-transferase activity toward 1-chloro-2,4-dinitrobenzene (CDNB) and benzyl isothiocyanate (BITC), and glutathione peroxidase activity toward cumene hydroperoxide. The sequence is that of Glutathione S-transferase U19 (GSTU19) from Arabidopsis thaliana (Mouse-ear cress).